The sequence spans 215 residues: Cytochrome b6 (215 aa).

The helical transmembrane segment at 32–52 (IFYCIGGITFTCFIMQVASGF) threads the bilayer. Residue C35 coordinates heme c. Heme b is bound by residues H86 and H100. 3 consecutive transmembrane segments (helical) span residues 90 to 110 (ASMM…TGGF), 116 to 136 (LTWV…VTGY), and 186 to 206 (LHTF…FLMI). Heme b-binding residues include H187 and H202.

This sequence belongs to the cytochrome b family. PetB subfamily. The 4 large subunits of the cytochrome b6-f complex are cytochrome b6, subunit IV (17 kDa polypeptide, PetD), cytochrome f and the Rieske protein, while the 4 small subunits are PetG, PetL, PetM and PetN. The complex functions as a dimer. The cofactor is heme b. Heme c is required as a cofactor.

It is found in the plastid. The protein resides in the chloroplast thylakoid membrane. Its function is as follows. Component of the cytochrome b6-f complex, which mediates electron transfer between photosystem II (PSII) and photosystem I (PSI), cyclic electron flow around PSI, and state transitions. The sequence is that of Cytochrome b6 from Mesostigma viride (Green alga).